Consider the following 404-residue polypeptide: Serine/threonine transporter SstT (404 aa).

Helical transmembrane passes span 17-37 (IGIGVVIGVMLGILAPDLTGF), 39-59 (ILGKLFVGGLKAIAPLLVFAL), 75-95 (MTLIIVLYLFGTFASALVAVL), 138-158 (ALATANYIGVLSWAIIFGLAL), 179-199 (IVVWIINLAPIGIMSLVFTTI), 212-232 (FLILVLVGTMVFVALVVNPLI), 287-307 (IPLGATINMGGAAITINVLTL), and 313-333 (FGIPIDFLTALLLSVVAAVSA).

Belongs to the dicarboxylate/amino acid:cation symporter (DAACS) (TC 2.A.23) family.

The protein localises to the cell membrane. It catalyses the reaction L-serine(in) + Na(+)(in) = L-serine(out) + Na(+)(out). It carries out the reaction L-threonine(in) + Na(+)(in) = L-threonine(out) + Na(+)(out). Involved in the import of serine and threonine into the cell, with the concomitant import of sodium (symport system). This Streptococcus pyogenes serotype M12 (strain MGAS2096) protein is Serine/threonine transporter SstT.